A 259-amino-acid polypeptide reads, in one-letter code: Glucose-1-phosphate thymidylyltransferase (259 aa).

It belongs to the inositol monophosphatase superfamily.

It catalyses the reaction dTTP + alpha-D-glucose 1-phosphate + H(+) = dTDP-alpha-D-glucose + diphosphate. It participates in antibiotic biosynthesis; streptomycin biosynthesis. In Streptomyces griseus, this protein is Glucose-1-phosphate thymidylyltransferase (strO).